Here is a 296-residue protein sequence, read N- to C-terminus: MATSSAALPRILGAGARAPSRWLGFLGKATPRPARPSRRTLGSATALMIRESEDSTDFNDKILNEPLKHSDFFNVKELFSVRSLFDARVHLGHKAGCRHRFMEPYIFGSRLDHDIIDLEQTATHLQLALNFTAHMAYRKGIILFISRNRQFSYLIENMARDCGEYAHTRYFRGGMLTNARLLFGPTVRLPDLIIFLHTLNNIFEPHVAVRDAAKMNIPTVGIVDTNCNPCLITYPVPGNDDSPLAVHLYCRLFQTAITRAKEKRQQVEALYRLQGQKEPGDQGPAHPPGADMSHSL.

The segment at 274–296 is disordered; the sequence is QGQKEPGDQGPAHPPGADMSHSL.

The protein belongs to the universal ribosomal protein uS2 family. As to quaternary structure, component of the mitochondrial small ribosomal subunit (mt-SSU). Mature mammalian 55S mitochondrial ribosomes consist of a small (28S) and a large (39S) subunit. The 28S small subunit contains a 12S ribosomal RNA (12S mt-rRNA) and 30 different proteins. The 39S large subunit contains a 16S rRNA (16S mt-rRNA), a copy of mitochondrial valine transfer RNA (mt-tRNA(Val)), which plays an integral structural role, and 52 different proteins.

Its subcellular location is the mitochondrion. Its function is as follows. Required for mitoribosome formation and stability, and mitochondrial translation. The chain is Small ribosomal subunit protein uS2m (MRPS2) from Homo sapiens (Human).